The sequence spans 616 residues: KIF-binding protein (616 aa).

The segment at 52–78 (EEEEESEAEGKEERRDGPESGGRRGES) is disordered. A compositionally biased stretch (basic and acidic residues) spans 59–78 (AEGKEERRDGPESGGRRGES).

The protein belongs to the KIF-binding protein family.

It localises to the cytoplasm. It is found in the cytoskeleton. Functionally, activator of KIF1B plus-end-directed microtubule motor activity. Required for organization of axonal microtubules, and axonal outgrowth and maintenance during peripheral and central nervous system development. The protein is KIF-binding protein of Xenopus tropicalis (Western clawed frog).